The primary structure comprises 157 residues: Ribosomal RNA large subunit methyltransferase H (157 aa).

S-adenosyl-L-methionine-binding positions include L73, G105, and 124 to 129 (LSKMTF).

It belongs to the RNA methyltransferase RlmH family. As to quaternary structure, homodimer.

It is found in the cytoplasm. It catalyses the reaction pseudouridine(1915) in 23S rRNA + S-adenosyl-L-methionine = N(3)-methylpseudouridine(1915) in 23S rRNA + S-adenosyl-L-homocysteine + H(+). Functionally, specifically methylates the pseudouridine at position 1915 (m3Psi1915) in 23S rRNA. The protein is Ribosomal RNA large subunit methyltransferase H of Phocaeicola vulgatus (strain ATCC 8482 / DSM 1447 / JCM 5826 / CCUG 4940 / NBRC 14291 / NCTC 11154) (Bacteroides vulgatus).